A 395-amino-acid chain; its full sequence is Choline/ethanolamine kinase (395 aa).

Residue alanine 2 is modified to N-acetylalanine. Residues 75-81, arginine 104, 146-152, glutamine 244, and aspartate 264 contribute to the ATP site; these read SGGLSNL and QYIPSRP. 77–79 contributes to the phosphocholine binding site; the sequence is GLS.

It belongs to the choline/ethanolamine kinase family. In terms of assembly, homodimer, and heterodimer with CHKA.

It catalyses the reaction choline + ATP = phosphocholine + ADP + H(+). The enzyme catalyses ethanolamine + ATP = phosphoethanolamine + ADP + H(+). The protein operates within phospholipid metabolism; phosphatidylethanolamine biosynthesis; phosphatidylethanolamine from ethanolamine: step 1/3. Has a key role in phospholipid metabolism, and catalyzes the first step of phosphatidylethanolamine and phosphatidylcholine biosynthesis. In Homo sapiens (Human), this protein is Choline/ethanolamine kinase (CHKB).